We begin with the raw amino-acid sequence, 367 residues long: Protein RIC-3 (367 aa).

The N-terminal stretch at 1 to 31 (MAYSTVQRVALASGLVLAVSLLLPKAFLSRG) is a signal peptide. Residues 30 to 67 (RGKRPEPPPGPEGKLDRFPPMMHHHSAPSDGQTPGARF) are disordered. At 32-95 (KRPEPPPGPE…AGGGGSGRGL (64 aa)) the chain is on the lumenal side. A helical membrane pass occupies residues 96-116 (MGQIIPIYGFGIFLYILYILF). Residues 117–367 (KLSKGKTAED…LRKRNPQGFE (251 aa)) are Cytoplasmic-facing. A coiled-coil region spans residues 138–169 (HRKITNFELVQLQEKLKETEEAMEKLINRVGP). K201 bears the N6-acetyllysine; alternate mark. Residue K201 forms a Glycyl lysine isopeptide (Lys-Gly) (interchain with G-Cter in ubiquitin); alternate linkage. Disordered stretches follow at residues 262–301 (QMGE…PESC) and 322–367 (ADGY…QGFE). Over residues 271–280 (SERLSWDHLP) the composition is skewed to basic and acidic residues. The segment covering 358–367 (LRKRNPQGFE) has biased composition (basic residues).

Belongs to the ric-3 family. Monomer and homodimer. Interacts with CHRNA7, CHRNA3, CHRNA4, CHRNB2, CHRNB4 and HTR3A. As to expression, expressed in brain, with highest levels in hippocampus, cerebellum and superior colliculus.

It is found in the endoplasmic reticulum membrane. Molecular chaperone which promotes the proper subunit assembly and surface trafficking of alpha-7 (CHRNA7) nicotinic acetylcholine receptor. Promotes the proper subunit assembly and cell surface expression of alpha-8 (CHRNA8) nicotinic acetylcholine receptor. May also promote functional expression of homomeric serotoninergic 5-HT3 receptors, and of heteromeric acetylcholine receptors alpha-3/beta-2, alpha-3/beta-4, alpha-4/beta-2 and alpha-4/beta-4. This is Protein RIC-3 (Ric3) from Mus musculus (Mouse).